Here is a 294-residue protein sequence, read N- to C-terminus: Filamin-B (294 aa).

2 Filamin repeats span residues 1–67 (GTRL…KVRV) and 71–163 (GQAG…KAKV). S61 and S157 each carry phosphoserine. Residue K160 forms a Glycyl lysine isopeptide (Lys-Gly) (interchain with G-Cter in ISG15) linkage. The interval 164-198 (TGQRLVGPGSTNETSSILVESVTRSSTETCYSAIP) is hinge 2. The tract at residues 164 to 294 (TGQRLVGPGS…PGSPFHVTVP (131 aa)) is self-association site, tail. S173 and S184 each carry phosphoserine. A Filamin 24 repeat occupies 199-293 (KASSDASKVT…IPGSPFHVTV (95 aa)). N6-succinyllysine occurs at positions 210 and 216. K268 is modified (N6-acetyllysine).

Belongs to the filamin family. In terms of assembly, homodimer. Interacts with FLNA, FLNC, INPPL1, ITGB1A, ITGB1D, ITGB3, ITGB6, MYOT, MYOZ1, PSEN1 and PSEN2. Interacts with MICALL2. Interacts with RFLNA and RFLNB. Interacts with HTLV-I viral p13 protein. Interacts with ASB2; the interaction targets FLNB for proteasomal degradation. Post-translationally, ISGylation prevents ability to interact with the upstream activators of the JNK cascade and inhibits IFNA-induced JNK signaling. In terms of processing, ubiquitination by a SCF-like complex containing ASB2 leads to proteasomal degradation which promotes muscle differentiation.

The protein resides in the cytoplasm. It localises to the cell cortex. The protein localises to the cytoskeleton. It is found in the myofibril. Its subcellular location is the sarcomere. The protein resides in the z line. In terms of biological role, connects cell membrane constituents to the actin cytoskeleton. May promote orthogonal branching of actin filaments and links actin filaments to membrane glycoproteins. Anchors various transmembrane proteins to the actin cytoskeleton. This is Filamin-B (FLNB) from Oryctolagus cuniculus (Rabbit).